A 264-amino-acid polypeptide reads, in one-letter code: MKQYLDLLDRVLTEGIEKGDRTGTGTISVFGHQMRFNLDEGFPCLTTKKLHLKSIIYELLWFLKGDTNVKYLQDHGVRIWNEWADETGDLGHIYGYQWRSWPTYDGGFIDQISEAVDAIKHNPDSRRIIVSAWNVGDLDHMNLPPCHAFFQFYVANGRLSLQLYQRSADIFLGVPFNIASYALLLQMMAQVTGLQAGDFIHTLGDAHIYLNHLEQVKLQLSREPRPLPQMKINPDVKNIFDFQFEDFELVNYDPHPHIAGKVAV.

R21 is a dUMP binding site. Position 51 (H51) interacts with (6R)-5,10-methylene-5,6,7,8-tetrahydrofolate. 126-127 contacts dUMP; it reads RR. The Nucleophile role is filled by C146. DUMP contacts are provided by residues 166–169, N177, and 207–209; these read RSAD and HIY. D169 contributes to the (6R)-5,10-methylene-5,6,7,8-tetrahydrofolate binding site. Position 263 (A263) interacts with (6R)-5,10-methylene-5,6,7,8-tetrahydrofolate.

The protein belongs to the thymidylate synthase family. Bacterial-type ThyA subfamily. Homodimer.

Its subcellular location is the cytoplasm. The enzyme catalyses dUMP + (6R)-5,10-methylene-5,6,7,8-tetrahydrofolate = 7,8-dihydrofolate + dTMP. The protein operates within pyrimidine metabolism; dTTP biosynthesis. Its function is as follows. Catalyzes the reductive methylation of 2'-deoxyuridine-5'-monophosphate (dUMP) to 2'-deoxythymidine-5'-monophosphate (dTMP) while utilizing 5,10-methylenetetrahydrofolate (mTHF) as the methyl donor and reductant in the reaction, yielding dihydrofolate (DHF) as a by-product. This enzymatic reaction provides an intracellular de novo source of dTMP, an essential precursor for DNA biosynthesis. In Bacteroides fragilis (strain ATCC 25285 / DSM 2151 / CCUG 4856 / JCM 11019 / LMG 10263 / NCTC 9343 / Onslow / VPI 2553 / EN-2), this protein is Thymidylate synthase.